The chain runs to 343 residues: Aspartate carbamoyltransferase catalytic subunit (343 aa).

Carbamoyl phosphate is bound by residues R91 and T92. Residue K119 participates in L-aspartate binding. Residues R141, H171, and Q174 each contribute to the carbamoyl phosphate site. L-aspartate is bound by residues R204 and R259. Residues G300 and P301 each coordinate carbamoyl phosphate.

Belongs to the aspartate/ornithine carbamoyltransferase superfamily. ATCase family. As to quaternary structure, heterododecamer (2C3:3R2) of six catalytic PyrB chains organized as two trimers (C3), and six regulatory PyrI chains organized as three dimers (R2).

It carries out the reaction carbamoyl phosphate + L-aspartate = N-carbamoyl-L-aspartate + phosphate + H(+). Its pathway is pyrimidine metabolism; UMP biosynthesis via de novo pathway; (S)-dihydroorotate from bicarbonate: step 2/3. In terms of biological role, catalyzes the condensation of carbamoyl phosphate and aspartate to form carbamoyl aspartate and inorganic phosphate, the committed step in the de novo pyrimidine nucleotide biosynthesis pathway. This Burkholderia cenocepacia (strain HI2424) protein is Aspartate carbamoyltransferase catalytic subunit.